We begin with the raw amino-acid sequence, 95 residues long: Large ribosomal subunit protein uL23 (95 aa).

Belongs to the universal ribosomal protein uL23 family. Part of the 50S ribosomal subunit. Contacts protein L29, and trigger factor when it is bound to the ribosome.

One of the early assembly proteins it binds 23S rRNA. One of the proteins that surrounds the polypeptide exit tunnel on the outside of the ribosome. Forms the main docking site for trigger factor binding to the ribosome. The protein is Large ribosomal subunit protein uL23 of Deinococcus deserti (strain DSM 17065 / CIP 109153 / LMG 22923 / VCD115).